A 251-amino-acid chain; its full sequence is Pyrroline-5-carboxylate reductase (251 aa).

Belongs to the pyrroline-5-carboxylate reductase family.

It is found in the cytoplasm. The enzyme catalyses L-proline + NADP(+) = (S)-1-pyrroline-5-carboxylate + NADPH + 2 H(+). The catalysed reaction is L-proline + NAD(+) = (S)-1-pyrroline-5-carboxylate + NADH + 2 H(+). The protein operates within amino-acid biosynthesis; L-proline biosynthesis; L-proline from L-glutamate 5-semialdehyde: step 1/1. Functionally, catalyzes the reduction of 1-pyrroline-5-carboxylate (PCA) to L-proline. The chain is Pyrroline-5-carboxylate reductase (proC) from Methanobrevibacter smithii.